We begin with the raw amino-acid sequence, 261 residues long: Flagellar L-ring protein (261 aa).

Positions 1–15 (MKRLLCLLLLTTLTG) are cleaved as a signal peptide. Cys-16 carries the N-palmitoyl cysteine lipid modification. The S-diacylglycerol cysteine moiety is linked to residue Cys-16. The span at 121 to 133 (KSADAELSKKNDS) shows a compositional bias: basic and acidic residues. The tract at residues 121–140 (KSADAELSKKNDSSMDPLQV) is disordered.

This sequence belongs to the FlgH family. As to quaternary structure, the basal body constitutes a major portion of the flagellar organelle and consists of four rings (L,P,S, and M) mounted on a central rod.

It is found in the cell outer membrane. It localises to the bacterial flagellum basal body. Functionally, assembles around the rod to form the L-ring and probably protects the motor/basal body from shearing forces during rotation. The polypeptide is Flagellar L-ring protein (Aliivibrio salmonicida (strain LFI1238) (Vibrio salmonicida (strain LFI1238))).